A 276-amino-acid polypeptide reads, in one-letter code: Large ribosomal subunit protein uL2 (276 aa).

The interval 224–265 (VMNPVDHPHGGGEGRTASGRHPVSPWGLPTKGYKTRNNKRTD) is disordered.

The protein belongs to the universal ribosomal protein uL2 family. Part of the 50S ribosomal subunit. Forms a bridge to the 30S subunit in the 70S ribosome.

Functionally, one of the primary rRNA binding proteins. Required for association of the 30S and 50S subunits to form the 70S ribosome, for tRNA binding and peptide bond formation. It has been suggested to have peptidyltransferase activity; this is somewhat controversial. Makes several contacts with the 16S rRNA in the 70S ribosome. This is Large ribosomal subunit protein uL2 from Dichelobacter nodosus (strain VCS1703A).